A 420-amino-acid chain; its full sequence is Tyrosine--tRNA ligase 1 (420 aa).

Residue tyrosine 35 participates in L-tyrosine binding. Positions 40–49 match the 'HIGH' region motif; it reads PTAGSLHIGH. Positions 172 and 176 each coordinate L-tyrosine. The 'KMSKS' region signature appears at 232-236; it reads KFGKT. Lysine 235 contacts ATP. The region spanning 355–419 is the S4 RNA-binding domain; the sequence is INIAELLVKS…GKKQFRLIKL (65 aa).

It belongs to the class-I aminoacyl-tRNA synthetase family. TyrS type 1 subfamily. Homodimer.

The protein localises to the cytoplasm. The catalysed reaction is tRNA(Tyr) + L-tyrosine + ATP = L-tyrosyl-tRNA(Tyr) + AMP + diphosphate + H(+). Functionally, catalyzes the attachment of tyrosine to tRNA(Tyr) in a two-step reaction: tyrosine is first activated by ATP to form Tyr-AMP and then transferred to the acceptor end of tRNA(Tyr). This is Tyrosine--tRNA ligase 1 from Pseudoalteromonas translucida (strain TAC 125).